We begin with the raw amino-acid sequence, 379 residues long: Protein COS2 (379 aa).

Residues 1 to 72 are Cytoplasmic-facing; sequence MKENELKNEK…WKLSNNCIYP (72 aa). The chain crosses the membrane as a helical span at residues 73–93; it reads LIVSLLVLFLGPIFVLVICGL. The Extracellular segment spans residues 94-254; that stretch reads SRKRSLSKQL…FLCCIYVSRG (161 aa). A helical membrane pass occupies residues 255–275; it reads MCLLLRTLYLGWILFMLVQGF. Topologically, residues 276-379 are cytoplasmic; sequence QNIRVLIMSM…QLSRSEVLLV (104 aa).

It belongs to the DUP/COS family.

It localises to the membrane. This chain is Protein COS2 (COS2), found in Saccharomyces cerevisiae (strain ATCC 204508 / S288c) (Baker's yeast).